We begin with the raw amino-acid sequence, 248 residues long: ATP synthase subunit a (248 aa).

Residues 1 to 3 (MLY) constitute a propeptide, removed in mature form. A run of 7 helical transmembrane segments spans residues 24-44 (MSLTNSSLYFIIAAIISFFIF), 86-106 (IYMPLIFSLFIIILVSNLVGL), 117-137 (FALPLGLSVTIIISVTVIGFV), 146-166 (VLLPSGTPLGLVPLLLVVELL), 183-203 (ITSGHILLNIISGFLFKTSGI), 205-225 (LLFVIIPFTLFIALTGLELIV), and 227-247 (ILQAYVWSILTCIYIKDSLIL).

The protein belongs to the ATPase A chain family. F-type ATPases have 2 components, CF(1) - the catalytic core - and CF(0) - the membrane proton channel. CF(1) has five subunits: alpha(3), beta(3), gamma(1), delta(1), epsilon(1). CF(0) has three main subunits: a, b and c.

It localises to the mitochondrion inner membrane. Its function is as follows. Mitochondrial membrane ATP synthase (F(1)F(0) ATP synthase or Complex V) produces ATP from ADP in the presence of a proton gradient across the membrane which is generated by electron transport complexes of the respiratory chain. F-type ATPases consist of two structural domains, F(1) - containing the extramembraneous catalytic core and F(0) - containing the membrane proton channel, linked together by a central stalk and a peripheral stalk. During catalysis, ATP synthesis in the catalytic domain of F(1) is coupled via a rotary mechanism of the central stalk subunits to proton translocation. Key component of the proton channel; it may play a direct role in the translocation of protons across the membrane. The chain is ATP synthase subunit a from Zancudomyces culisetae (Gut fungus).